We begin with the raw amino-acid sequence, 255 residues long: Triosephosphate isomerase (255 aa).

Asn9–Lys11 contributes to the substrate binding site. The active-site Electrophile is the His95. Glu167 (proton acceptor) is an active-site residue. Substrate contacts are provided by residues Gly173, Ser212, and Gly233–Gly234.

It belongs to the triosephosphate isomerase family. In terms of assembly, homodimer.

Its subcellular location is the cytoplasm. It carries out the reaction D-glyceraldehyde 3-phosphate = dihydroxyacetone phosphate. The protein operates within carbohydrate biosynthesis; gluconeogenesis. It functions in the pathway carbohydrate degradation; glycolysis; D-glyceraldehyde 3-phosphate from glycerone phosphate: step 1/1. Involved in the gluconeogenesis. Catalyzes stereospecifically the conversion of dihydroxyacetone phosphate (DHAP) to D-glyceraldehyde-3-phosphate (G3P). The polypeptide is Triosephosphate isomerase (Yersinia pseudotuberculosis serotype O:1b (strain IP 31758)).